The following is a 186-amino-acid chain: Transcriptional repressor NrdR (186 aa).

The disordered stretch occupies residues 1-24 (MRCPYCGGLDTQVKDSRPSDDASA). The segment at 3-34 (CPYCGGLDTQVKDSRPSDDASAIRRRRICPDC) is a zinc-finger region. Residues 12–24 (QVKDSRPSDDASA) are compositionally biased toward basic and acidic residues. Positions 49 to 139 (LTVVKRSGRR…VYKNFREARD (91 aa)) constitute an ATP-cone domain. Residues 146 to 186 (RLNGAGRPGGEPEPPDEAAPGPAAAPGEGGEAPARRARSRA) are disordered.

Belongs to the NrdR family. Zn(2+) is required as a cofactor.

In terms of biological role, negatively regulates transcription of bacterial ribonucleotide reductase nrd genes and operons by binding to NrdR-boxes. In Methylobacterium sp. (strain 4-46), this protein is Transcriptional repressor NrdR.